Here is a 530-residue protein sequence, read N- to C-terminus: uncharacterized protein (530 aa).

A disordered region spans residues 362–408 (NLTPKLNKTNEDIKSDSTSQPQGFPEGNRRVMENPETKVSKTDDEEM). The segment covering 388–403 (GNRRVMENPETKVSKT) has biased composition (basic and acidic residues).

It belongs to the IIV-6 030L family.

This is an uncharacterized protein from Invertebrate iridescent virus 6 (IIV-6).